The chain runs to 261 residues: 5'-nucleotidase SurE (261 aa).

4 residues coordinate a divalent metal cation: aspartate 18, aspartate 19, serine 50, and asparagine 102.

This sequence belongs to the SurE nucleotidase family. A divalent metal cation is required as a cofactor.

Its subcellular location is the cytoplasm. It catalyses the reaction a ribonucleoside 5'-phosphate + H2O = a ribonucleoside + phosphate. Nucleotidase that shows phosphatase activity on nucleoside 5'-monophosphates. The polypeptide is 5'-nucleotidase SurE (Rhodospirillum rubrum (strain ATCC 11170 / ATH 1.1.1 / DSM 467 / LMG 4362 / NCIMB 8255 / S1)).